The primary structure comprises 297 residues: Small ribosomal subunit biogenesis GTPase RsgA (297 aa).

A CP-type G domain is found at 65–223 (TNEIGRPAVA…IADTPGFSAI (159 aa)). Residues 114-117 (SKAD) and 166-174 (GQSGAGKST) each bind GTP. The Zn(2+) site is built by Cys247, Cys252, His254, and Cys260.

This sequence belongs to the TRAFAC class YlqF/YawG GTPase family. RsgA subfamily. In terms of assembly, monomer. Associates with 30S ribosomal subunit, binds 16S rRNA. Requires Zn(2+) as cofactor.

It is found in the cytoplasm. Its function is as follows. One of several proteins that assist in the late maturation steps of the functional core of the 30S ribosomal subunit. Helps release RbfA from mature subunits. May play a role in the assembly of ribosomal proteins into the subunit. Circularly permuted GTPase that catalyzes slow GTP hydrolysis, GTPase activity is stimulated by the 30S ribosomal subunit. This chain is Small ribosomal subunit biogenesis GTPase RsgA, found in Lactobacillus gasseri (strain ATCC 33323 / DSM 20243 / BCRC 14619 / CIP 102991 / JCM 1131 / KCTC 3163 / NCIMB 11718 / NCTC 13722 / AM63).